The sequence spans 551 residues: Protein PLASTID TRANSCRIPTIONALLY ACTIVE 12, chloroplastic (551 aa).

The N-terminal 47 residues, 1-47, are a transit peptide targeting the chloroplast; sequence MASCSRTWLLPGMAPQATAQTVPRPLQSLKVFAGLPHRRRVLFSGVS. Disordered stretches follow at residues 76–161 and 463–529; these read SSYF…EGES and HSYN…DQLS. Residues 109 to 119 are compositionally biased toward low complexity; it reads RVRAARAPAPV. Composition is skewed to acidic residues over residues 467–476 and 485–498; these read EDSDDDEEDA and SLEDDEDDGDDAED. Positions 505–516 are enriched in polar residues; that stretch reads RNWSVLKTTGQA. The span at 518 to 529 shows a compositional bias: basic and acidic residues; that stretch reads NPKEKSKKDQLS.

As to quaternary structure, component of the plastid-encoded plastid RNA polymerase (PEP) complex.

Its subcellular location is the plastid. It is found in the chloroplast. Its function is as follows. Required for the activity of the plastid-encoded RNA polymerase (PEP) and full expression of genes transcribed by PEP. Required for the proper build-up and formation of the PEP-complex. Binds single-stranded (ss) DNA and RNA, but not double-stranded (ds) DNA. The sequence is that of Protein PLASTID TRANSCRIPTIONALLY ACTIVE 12, chloroplastic from Oryza sativa subsp. japonica (Rice).